The primary structure comprises 209 residues: Large ribosomal subunit protein uL3 (209 aa).

Glutamine 150 is subject to N5-methylglutamine.

Belongs to the universal ribosomal protein uL3 family. Part of the 50S ribosomal subunit. Forms a cluster with proteins L14 and L19. Post-translationally, methylated by PrmB.

Its function is as follows. One of the primary rRNA binding proteins, it binds directly near the 3'-end of the 23S rRNA, where it nucleates assembly of the 50S subunit. In Salmonella paratyphi C (strain RKS4594), this protein is Large ribosomal subunit protein uL3.